Reading from the N-terminus, the 192-residue chain is Hydrophobin-like protein rodD (192 aa).

Cystine bridges form between Cys45–Cys106, Cys50–Cys99, and Cys107–Cys112.

Belongs to the fungal hydrophobin family. In terms of assembly, self-assembles to form functional amyloid fibrils called rodlets. Self-assembly into fibrillar rodlets occurs spontaneously at hydrophobic:hydrophilic interfaces and the rodlets further associate laterally to form amphipathic monolayers.

In terms of biological role, aerial growth, conidiation, and dispersal of filamentous fungi in the environment rely upon a capability of their secreting small amphipathic proteins called hydrophobins (HPBs) with low sequence identity. Class I can self-assemble into an outermost layer of rodlet bundles on aerial cell surfaces, conferring cellular hydrophobicity that supports fungal growth, development and dispersal; whereas Class II form highly ordered films at water-air interfaces through intermolecular interactions but contribute nothing to the rodlet structure. RodD is a an hydrophobin-like protein that, unlike rodA, is not required for rodlet formation. This chain is Hydrophobin-like protein rodD, found in Aspergillus fumigatus (strain ATCC MYA-4609 / CBS 101355 / FGSC A1100 / Af293) (Neosartorya fumigata).